The primary structure comprises 433 residues: Glutamyl-tRNA reductase (433 aa).

Residues 49–52 (TCNR), Ser109, 114–116 (EGQ), and Gln120 each bind substrate. Catalysis depends on Cys50, which acts as the Nucleophile. 198 to 203 (GAGRMS) contacts NADP(+).

Belongs to the glutamyl-tRNA reductase family. Homodimer.

It carries out the reaction (S)-4-amino-5-oxopentanoate + tRNA(Glu) + NADP(+) = L-glutamyl-tRNA(Glu) + NADPH + H(+). It participates in porphyrin-containing compound metabolism; protoporphyrin-IX biosynthesis; 5-aminolevulinate from L-glutamyl-tRNA(Glu): step 1/2. The protein operates within porphyrin-containing compound metabolism; chlorophyll biosynthesis. Functionally, catalyzes the NADPH-dependent reduction of glutamyl-tRNA(Glu) to glutamate 1-semialdehyde (GSA). This Prochlorococcus marinus subsp. pastoris (strain CCMP1986 / NIES-2087 / MED4) protein is Glutamyl-tRNA reductase.